We begin with the raw amino-acid sequence, 105 residues long: Thioredoxin (105 aa).

A Thioredoxin domain is found at 1–105 (VQVISSYDQF…LQAAITQHSA (105 aa)). Catalysis depends on nucleophile residues Cys29 and Cys32. A disulfide bridge links Cys29 with Cys32.

It belongs to the thioredoxin family. In terms of assembly, monomer.

Its function is as follows. Participates in various redox reactions through the reversible oxidation of its active center dithiol to a disulfide and catalyzes dithiol-disulfide exchange reactions. This is Thioredoxin from Malassezia sympodialis (Atopic eczema-associated yeast).